A 153-amino-acid polypeptide reads, in one-letter code: Phosphoribosyl-AMP cyclohydrolase (153 aa).

Mg(2+) is bound at residue aspartate 93. Residue cysteine 94 participates in Zn(2+) binding. Residues aspartate 95 and aspartate 97 each contribute to the Mg(2+) site. Zn(2+)-binding residues include cysteine 112 and cysteine 119.

The protein belongs to the PRA-CH family. As to quaternary structure, homodimer. Mg(2+) serves as cofactor. It depends on Zn(2+) as a cofactor.

It is found in the cytoplasm. It catalyses the reaction 1-(5-phospho-beta-D-ribosyl)-5'-AMP + H2O = 1-(5-phospho-beta-D-ribosyl)-5-[(5-phospho-beta-D-ribosylamino)methylideneamino]imidazole-4-carboxamide. The protein operates within amino-acid biosynthesis; L-histidine biosynthesis; L-histidine from 5-phospho-alpha-D-ribose 1-diphosphate: step 3/9. Catalyzes the hydrolysis of the adenine ring of phosphoribosyl-AMP. This chain is Phosphoribosyl-AMP cyclohydrolase, found in Mesorhizobium japonicum (strain LMG 29417 / CECT 9101 / MAFF 303099) (Mesorhizobium loti (strain MAFF 303099)).